The primary structure comprises 209 residues: Tektin bundle-interacting protein 1 (209 aa).

In terms of assembly, microtubule inner protein component of sperm flagellar doublet microtubules.

The protein localises to the cytoplasm. It is found in the cytoskeleton. The protein resides in the cilium axoneme. It localises to the flagellum axoneme. Functionally, microtubule inner protein (MIP) part of the dynein-decorated doublet microtubules (DMTs) in cilia axoneme, which is required for motile cilia beating. Located at the center of the tektin bundle where may function to recruit tektins or stabilize the bundle. The sequence is that of Tektin bundle-interacting protein 1 (TEKTIP1) from Macaca fascicularis (Crab-eating macaque).